Here is an 87-residue protein sequence, read N- to C-terminus: Small ribosomal subunit protein bS20 (87 aa).

Residues 1–29 (MANTAQARKRARQAVKQNAHNSSQRSTLR) are disordered. The span at 20–29 (HNSSQRSTLR) shows a compositional bias: polar residues.

The protein belongs to the bacterial ribosomal protein bS20 family.

Functionally, binds directly to 16S ribosomal RNA. The sequence is that of Small ribosomal subunit protein bS20 from Herminiimonas arsenicoxydans.